Reading from the N-terminus, the 458-residue chain is MTATKGRNVVVVGTQWGDEGKGKLVDWLTQSAQGVVRFQGGHNAGHTLVINGVKTALHLIPSGIMRPGVKCYIGNGVVLSAAKLFEEIEGLEKAGVEVRSRLRISEACPLILPFHAAIDIAREAAREQGGAEKIGTTGRGIGPAYEDKIARRALRVQDLKHPERFAARLRELLDLHNHLLTTYLGSATFVFDAALKPYIEAGKVQFDVVHAEAMRHAELLKPMMADVSRELNEAHRAGINLLFEGAQGTLLDVDHGTYPYVTSSNCVAGNAAAGSGVGPGMLHYILGITKAYCTRVGGGPFPTELDWQVPGTPGYHMSLVGAEKGVTTGRSRRCGWFDAALLKRSAQVNGLSGLCITKLDVLDGLAELRLCTGYELDGARIDLPPMGAEDIIRCRPIYETLPGWSESTVGVTDYAKLPQNARRYLERIEQVTGVPIDLISTSPDRDHTIMMRHPYDAG.

GTP contacts are provided by residues 17-23 and 45-47; these read GDEGKGK and GHT. Asp18 serves as the catalytic Proton acceptor. Mg(2+)-binding residues include Asp18 and Gly45. IMP contacts are provided by residues 18–21, 43–46, Thr137, Arg151, Gln247, Thr262, and Arg330; these read DEGK and NAGH. The Proton donor role is filled by His46. 326–332 contacts substrate; that stretch reads VTTGRSR. Residues Arg332, 358–360, and 440–442 contribute to the GTP site; these read KLD and STS.

Belongs to the adenylosuccinate synthetase family. As to quaternary structure, homodimer. The cofactor is Mg(2+).

It is found in the cytoplasm. The catalysed reaction is IMP + L-aspartate + GTP = N(6)-(1,2-dicarboxyethyl)-AMP + GDP + phosphate + 2 H(+). It participates in purine metabolism; AMP biosynthesis via de novo pathway; AMP from IMP: step 1/2. Functionally, plays an important role in the de novo pathway of purine nucleotide biosynthesis. Catalyzes the first committed step in the biosynthesis of AMP from IMP. In Verminephrobacter eiseniae (strain EF01-2), this protein is Adenylosuccinate synthetase.